A 487-amino-acid chain; its full sequence is N-succinylglutamate 5-semialdehyde dehydrogenase (487 aa).

Residue 221-226 participates in NAD(+) binding; the sequence is GSSDTG. Residues Glu-244 and Cys-278 contribute to the active site.

This sequence belongs to the aldehyde dehydrogenase family. AstD subfamily.

It carries out the reaction N-succinyl-L-glutamate 5-semialdehyde + NAD(+) + H2O = N-succinyl-L-glutamate + NADH + 2 H(+). It participates in amino-acid degradation; L-arginine degradation via AST pathway; L-glutamate and succinate from L-arginine: step 4/5. Its function is as follows. Catalyzes the NAD-dependent reduction of succinylglutamate semialdehyde into succinylglutamate. The protein is N-succinylglutamate 5-semialdehyde dehydrogenase of Burkholderia mallei (strain ATCC 23344).